The sequence spans 466 residues: Arginine biosynthesis bifunctional protein ArgJ, mitochondrial (466 aa).

Positions 194, 223, 234, 321, 461, and 466 each coordinate substrate. The active-site Nucleophile is Thr234.

It belongs to the ArgJ family. As to quaternary structure, heterodimer of an alpha and a beta chain. In terms of processing, the alpha and beta chains are autoproteolytically processed from a single precursor protein within the mitochondrion.

The protein resides in the mitochondrion matrix. It carries out the reaction N(2)-acetyl-L-ornithine + L-glutamate = N-acetyl-L-glutamate + L-ornithine. The catalysed reaction is L-glutamate + acetyl-CoA = N-acetyl-L-glutamate + CoA + H(+). It participates in amino-acid biosynthesis; L-arginine biosynthesis; L-ornithine and N-acetyl-L-glutamate from L-glutamate and N(2)-acetyl-L-ornithine (cyclic): step 1/1. Its pathway is amino-acid biosynthesis; L-arginine biosynthesis; N(2)-acetyl-L-ornithine from L-glutamate: step 1/4. Functionally, catalyzes two activities which are involved in the cyclic version of arginine biosynthesis: the synthesis of acetylglutamate from glutamate and acetyl-CoA, and of ornithine by transacetylation between acetylornithine and glutamate. The polypeptide is Arginine biosynthesis bifunctional protein ArgJ, mitochondrial (Aspergillus fumigatus (strain ATCC MYA-4609 / CBS 101355 / FGSC A1100 / Af293) (Neosartorya fumigata)).